The sequence spans 4835 residues: Midasin (4835 aa).

AAA-ATPase protomer regions lie at residues 12–161 (EVLR…PLVL), 324–689 (RSLD…HRFR), 797–1049 (MTTI…AEII), 1096–1375 (KFQD…DYIT), 1489–1738 (APTT…FGYR), and 1821–2110 (ALEA…SIDI). ATP is bound by residues 31–38 (GPSASGRT), 356–363 (GPTGIGKT), 814–821 (GTTSSGKT), 1127–1134 (GVSGAGKT), 1513–1520 (GDPGVGKS), and 1839–1846 (GSPESGKS). Positions 2197 to 4058 (SVFIASTLNA…DGTGDQNVSK (1862 aa)) are linker. Disordered stretches follow at residues 4033–4056 (DQKE…DQNV) and 4108–4523 (IEEE…LLNP). 5 stretches are compositionally biased toward acidic residues: residues 4109–4133 (EEED…QGEA), 4141–4150 (EDDDSAEEYS), 4226–4241 (ADGE…EEEQ), 4282–4291 (VDIDDNEASD), and 4315–4330 (NDEE…DQEN). Positions 4331–4346 (ITDSNPDANEVGTNDQ) are enriched in polar residues. Basic and acidic residues-rich tracts occupy residues 4347–4360 (KQTH…RQEN), 4394–4415 (EFQR…KDEA), and 4429–4438 (VEFDDSKSGR). Residues 4468 to 4477 (HNSSCETSQS) show a composition bias toward polar residues. A compositionally biased stretch (basic and acidic residues) spans 4478 to 4488 (SHDRPPAEHLN). The 190-residue stretch at 4629–4818 (QVLLAVDDSS…RHIEDLPETL (190 aa)) folds into the VWFA domain.

Belongs to the midasin family. Associates with pre-60S ribosomes in the nucleoplasm.

The protein resides in the nucleus. It localises to the nucleolus. It is found in the nucleoplasm. Nuclear chaperone required for maturation and nuclear export of pre-60S ribosome subunits. Functions at successive maturation steps to remove ribosomal factors at critical transition points, first driving the exit of early pre-60S particles from the nucleolus and then driving late pre-60S particles from the nucleus. This is Midasin (MDN1) from Giardia intestinalis (Giardia lamblia).